The chain runs to 833 residues: Leucine--tRNA ligase (833 aa).

The 'HIGH' region motif lies at 41 to 52 (PYPSGAGLHVGH). Positions 610 to 614 (KMSKS) match the 'KMSKS' region motif. Position 613 (lysine 613) interacts with ATP.

Belongs to the class-I aminoacyl-tRNA synthetase family.

Its subcellular location is the cytoplasm. The catalysed reaction is tRNA(Leu) + L-leucine + ATP = L-leucyl-tRNA(Leu) + AMP + diphosphate. This Streptococcus uberis (strain ATCC BAA-854 / 0140J) protein is Leucine--tRNA ligase.